We begin with the raw amino-acid sequence, 398 residues long: Queuine tRNA-ribosyltransferase (398 aa).

The active-site Proton acceptor is Asp102. Residues 102 to 106, Asp156, Gln205, and Gly232 each bind substrate; that span reads DSGGF. An RNA binding region spans residues 263-269; sequence GVGTPED. Asp282 functions as the Nucleophile in the catalytic mechanism. The segment at 287–291 is RNA binding; important for wobble base 34 recognition; that stretch reads TRNAR. Residues Cys320, Cys322, Cys325, and His362 each contribute to the Zn(2+) site.

It belongs to the queuine tRNA-ribosyltransferase family. As to quaternary structure, homodimer. Within each dimer, one monomer is responsible for RNA recognition and catalysis, while the other monomer binds to the replacement base PreQ1. Zn(2+) is required as a cofactor.

The catalysed reaction is 7-aminomethyl-7-carbaguanine + guanosine(34) in tRNA = 7-aminomethyl-7-carbaguanosine(34) in tRNA + guanine. The protein operates within tRNA modification; tRNA-queuosine biosynthesis. In terms of biological role, catalyzes the base-exchange of a guanine (G) residue with the queuine precursor 7-aminomethyl-7-deazaguanine (PreQ1) at position 34 (anticodon wobble position) in tRNAs with GU(N) anticodons (tRNA-Asp, -Asn, -His and -Tyr). Catalysis occurs through a double-displacement mechanism. The nucleophile active site attacks the C1' of nucleotide 34 to detach the guanine base from the RNA, forming a covalent enzyme-RNA intermediate. The proton acceptor active site deprotonates the incoming PreQ1, allowing a nucleophilic attack on the C1' of the ribose to form the product. After dissociation, two additional enzymatic reactions on the tRNA convert PreQ1 to queuine (Q), resulting in the hypermodified nucleoside queuosine (7-(((4,5-cis-dihydroxy-2-cyclopenten-1-yl)amino)methyl)-7-deazaguanosine). In Polaromonas sp. (strain JS666 / ATCC BAA-500), this protein is Queuine tRNA-ribosyltransferase.